Consider the following 231-residue polypeptide: Uracil-DNA glycosylase (231 aa).

The active-site Proton acceptor is aspartate 74.

Belongs to the uracil-DNA glycosylase (UDG) superfamily. UNG family.

The protein resides in the cytoplasm. It catalyses the reaction Hydrolyzes single-stranded DNA or mismatched double-stranded DNA and polynucleotides, releasing free uracil.. Functionally, excises uracil residues from the DNA which can arise as a result of misincorporation of dUMP residues by DNA polymerase or due to deamination of cytosine. This Campylobacter jejuni subsp. doylei (strain ATCC BAA-1458 / RM4099 / 269.97) protein is Uracil-DNA glycosylase.